The chain runs to 323 residues: MVFAKISQLAHYAPSQIIKNEDLSLIMDTSDDWISSRTGIKQRHISKNETTADLANKVAEQLIEKSGYSASQIDFIIVATMTPDSMMPSTAARVQAHIGASNAFAFDLSAACSGFVFALSTAEKLISSGSYQKGLVIGAETVSKVLDWTDRGTAVLFGDGAGGVLLEASKEKHFLAESLNTDGSRQGLQSSQVGLNSPFSDEVLDDKFLKMDGRAIFDFAIKEVSKSINHLIETSYLEKEDIDYLFLHQANRRILDKMSRKIDIARDKFPENMMDYGNTSAASIPILLSESYENGLLKLDGNQTILLSGFGGGLTWGSLIVKI.

Active-site residues include Cys112 and His248. The ACP-binding stretch occupies residues 249–253 (QANRR). Asn278 is a catalytic residue.

This sequence belongs to the thiolase-like superfamily. FabH family. In terms of assembly, homodimer.

The protein localises to the cytoplasm. The catalysed reaction is malonyl-[ACP] + acetyl-CoA + H(+) = 3-oxobutanoyl-[ACP] + CO2 + CoA. Its pathway is lipid metabolism; fatty acid biosynthesis. Catalyzes the condensation reaction of fatty acid synthesis by the addition to an acyl acceptor of two carbons from malonyl-ACP. Catalyzes the first condensation reaction which initiates fatty acid synthesis and may therefore play a role in governing the total rate of fatty acid production. Possesses both acetoacetyl-ACP synthase and acetyl transacylase activities. Its substrate specificity determines the biosynthesis of branched-chain and/or straight-chain of fatty acids. The protein is Beta-ketoacyl-[acyl-carrier-protein] synthase III of Streptococcus agalactiae serotype Ia (strain ATCC 27591 / A909 / CDC SS700).